The primary structure comprises 720 residues: DNA replication licensing factor mcm7-B (720 aa).

The C4-type zinc finger occupies 183-210 (CDQCGAETYQPIQSPTFMPLIMCPSREC). The MCM domain maps to 331–537 (FYEKLAASIA…NDLRLAQHIT (207 aa)). ATP contacts are provided by Tyr-344, Gly-383, Ala-385, Lys-386, Ser-387, Asn-488, Arg-513, and Arg-603. The short motif at 512 to 515 (SRFD) is the Arginine finger element.

This sequence belongs to the MCM family. In terms of assembly, component of the mcm2-7 complex (RLF-M). The complex forms a toroidal hexameric ring with the proposed subunit order mcm2-mcm6-mcm4-mcm7-mcm3-mcm5. The heterodimer of mmcm3/mcm5 interacts with mcm4, mmcm6, mcm7 and weakly with mcm2. The N-terminus is required for interaction with mmcm3, though this interaction may not be direct, and remains in a complex with mmcm3 throughout the cell cycle. Begins to associate with zmcm6 at the neurula stage. Component of the replisome complex. Component of the CMG helicase complex, composed of the mcm2-7 complex, the GINS complex and cdc45. Post-translationally, ubiquitinated by traip when forks converge following formation of DNA interstrand cross-links. Short ubiquitin chains on mcm7 promote recruitment of DNA glycosylase neil3. If the interstrand cross-link cannot be cleaved by neil3, the ubiquitin chains continue to grow on mcm7, promoting the unloading of the CMG helicase complex by the vcp/p97 ATPase.

Its subcellular location is the nucleus. The protein localises to the chromosome. The enzyme catalyses ATP + H2O = ADP + phosphate + H(+). In terms of biological role, acts as a component of the mcm2-7 complex (mcm complex) which is the putative replicative helicase essential for 'once per cell cycle' DNA replication initiation and elongation in eukaryotic cells. The active ATPase sites in the mcm2-7 ring are formed through the interaction surfaces of two neighboring subunits such that a critical structure of a conserved arginine finger motif is provided in trans relative to the ATP-binding site of the Walker A box of the adjacent subunit. The six ATPase active sites, however, are likely to contribute differentially to the complex helicase activity. The existence of maternal and zygotic forms of mcm3 and mcm6 suggests that specific forms of mcm2-7 complexes may be used during different stages of development. The sequence is that of DNA replication licensing factor mcm7-B (mcm7-b) from Xenopus laevis (African clawed frog).